We begin with the raw amino-acid sequence, 118 residues long: Large ribosomal subunit protein bL20 (118 aa).

The protein belongs to the bacterial ribosomal protein bL20 family.

Its function is as follows. Binds directly to 23S ribosomal RNA and is necessary for the in vitro assembly process of the 50S ribosomal subunit. It is not involved in the protein synthesizing functions of that subunit. The protein is Large ribosomal subunit protein bL20 of Caulobacter vibrioides (strain ATCC 19089 / CIP 103742 / CB 15) (Caulobacter crescentus).